The chain runs to 829 residues: MSASLFWKCSCPRRITLCPHWRPCQRLRVSLRHAPHLKRCAATLRVAAGSHDVPLAWPGLAHFLEHLLFLGTERFPVEQGLMAYVRAQGGQLNARTCERATEFFFELPASAFAGGLERLCEMLAQPRMSLEDQHREREVLHAEFIAWSRDATAQRQFALFDGLHAAHPLRAFHAGNRYSLNLPNNAFQQALQQFHREYYQAGQMVLSLAGPQPLEELRALAERYGSCLPSGQHLEQTAPPALMTTGNQTYQQLSGQRLDLLFALERLPAGATAAVDFLCTWLQSAKPGGLLAELQQRQLAHSLKATLLYEFAGQALLHLEFDLTSVAASAPVQVRELLTEWLGFFSAQADWAPLREEYVLLQQRQIEVASALELSRRDSRQAADGLDESGLAALKQVLKQLQPQAVEHFSHDWRLPPANPFLRSTIEAPRAGLIRGQTSAHRGLRTFAQDRSRGRKESSALSFSQALPADPSGSALTLRWQLASPAPMGLHARLLRSLATLRDDARQAGVELIFTSCGKDWLLKLHGLPSPMPAVLLQALKALGRPAESFWQEQASVNAEAPLLTIRQLLKAFSEQPQPDSPAQPDPEALQALWASARWDGLGLALPAAIQEALSRTLQQMPGTADATLCRPVPAGTGQQWQNLPGSAGEHALLLFYPVPSASLADEAAWRLLGQLCQTPFYQRLRVELQLGYGVFSAVRQRNGRTGLLFGVQSPGATVTEILQHIAQFLEHLPEQLQALDEPSWNDQQQALAQQLQPATLPLDQAMELLWQAKLAGHSSDYLPQLQGCIEALTPAIVIQAARQLREAAGGCSALANRPCPGTPWQVAE.

His62 provides a ligand contact to Zn(2+). Residue Glu65 is the Proton acceptor of the active site. Zn(2+)-binding residues include His66 and Glu143.

The protein belongs to the peptidase M16 family. The cofactor is Zn(2+).

It participates in cofactor biosynthesis; pyrroloquinoline quinone biosynthesis. Required for coenzyme pyrroloquinoline quinone (PQQ) biosynthesis. It is thought that this protein is a protease that cleaves peptides bond in a small peptide (gene pqqA), providing the glutamate and tyrosine residues which are necessary for the synthesis of PQQ. In Pseudomonas protegens (strain DSM 19095 / LMG 27888 / CFBP 6595 / CHA0), this protein is Coenzyme PQQ synthesis protein F (pqqF).